Reading from the N-terminus, the 857-residue chain is DNA gyrase subunit A (857 aa).

Residues 39–507 (LPDVRDGLKP…YEGDMSIEDL (469 aa)) enclose the Topo IIA-type catalytic domain. Y127 (O-(5'-phospho-DNA)-tyrosine intermediate) is an active-site residue. The GyrA-box motif lies at 534–540 (QKRGGKG). The segment at 825 to 857 (REAEEVDGDVAVDETAEGAATTGTDEGEAPSAE) is disordered. Residues 828–840 (EEVDGDVAVDETA) show a composition bias toward acidic residues.

This sequence belongs to the type II topoisomerase GyrA/ParC subunit family. As to quaternary structure, heterotetramer, composed of two GyrA and two GyrB chains. In the heterotetramer, GyrA contains the active site tyrosine that forms a transient covalent intermediate with DNA, while GyrB binds cofactors and catalyzes ATP hydrolysis.

Its subcellular location is the cytoplasm. The catalysed reaction is ATP-dependent breakage, passage and rejoining of double-stranded DNA.. In terms of biological role, a type II topoisomerase that negatively supercoils closed circular double-stranded (ds) DNA in an ATP-dependent manner to modulate DNA topology and maintain chromosomes in an underwound state. Negative supercoiling favors strand separation, and DNA replication, transcription, recombination and repair, all of which involve strand separation. Also able to catalyze the interconversion of other topological isomers of dsDNA rings, including catenanes and knotted rings. Type II topoisomerases break and join 2 DNA strands simultaneously in an ATP-dependent manner. In Streptomyces coelicolor (strain ATCC BAA-471 / A3(2) / M145), this protein is DNA gyrase subunit A.